We begin with the raw amino-acid sequence, 243 residues long: QNTVNFTYPDFWSYSLKNGTEITFLGDATRIPGALQLTKTDANGNPVRSSAGQASYSEPVFLWDSTGKAASFYTSFTFLLKNYGAPTADGLAFFLAPVDSSVKDYGGFLGLFRHETAADPSKNQVVAVEFDTWINKDWNDPPYPHIGIDVNSIVSVATTRWENDDAYGSSIATAHITYDARSKILTVLLSYEHGRDYILSHVVDLAKVLPQKVRIGFSAGVGYDEVTYILSWHFFSTLDGTNK.

Gln1 carries the post-translational modification Pyrrolidone carboxylic acid. Asn5 is a glycosylation site (N-linked (GlcNAc...) asparagine; in alpha chain). N-linked (GlcNAc...) asparagine glycosylation is present at Asn18. Glu129 and Asp131 together coordinate Mn(2+). The Ca(2+) site is built by Asp131, Trp133, Asn135, and Asp140. Mn(2+) contacts are provided by Asp140 and His145.

Belongs to the leguminous lectin family. As to quaternary structure, homodimer of Alpha and Beta forms. Post-translationally, N-glycosylation of Asn-5 converts form Beta to form Alpha.

Its function is as follows. Lectin which has a strong affinity for both the Lewis b and y human blood-group determinants. The chain is Lectin-4 from Griffonia simplicifolia (Bandeiraea simplicifolia).